Reading from the N-terminus, the 262-residue chain is Phosphonates import ATP-binding protein PhnC 3 (262 aa).

An ABC transporter domain is found at 3–245; the sequence is IQLECLSVTY…ELNRIYGNAE (243 aa). 36-43 provides a ligand contact to ATP; it reads GASGSGKS.

Belongs to the ABC transporter superfamily. Phosphonates importer (TC 3.A.1.9.1) family. As to quaternary structure, the complex is composed of two ATP-binding proteins (PhnC), two transmembrane proteins (PhnE) and a solute-binding protein (PhnD).

It localises to the cell inner membrane. It catalyses the reaction phosphonate(out) + ATP + H2O = phosphonate(in) + ADP + phosphate + H(+). Part of the ABC transporter complex PhnCDE involved in phosphonates import. Responsible for energy coupling to the transport system. The polypeptide is Phosphonates import ATP-binding protein PhnC 3 (Nostoc sp. (strain PCC 7120 / SAG 25.82 / UTEX 2576)).